The following is a 478-amino-acid chain: F-box protein YDR306C (478 aa).

Residues 1–14 are compositionally biased toward basic residues; it reads MANKSRPKKIKAPY. Disordered regions lie at residues 1–32 and 67–101; these read MANK…DNKA and RLSN…VIES. Low complexity predominate over residues 80–90; sequence QSPSSSSTSSS. The segment covering 91-101 has biased composition (basic and acidic residues); that stretch reads KGEKNGKVIES. The F-box domain occupies 112–173; the sequence is KMVLPWEIQH…CLPKLYYAPA (62 aa).

In terms of assembly, interacts with SKP1. Component of the probable SCF(YDR306C) complex containing CDC53, SKP1, RBX1 and YDR306C. Autoubiquitinated by the E3 ubiquitin ligase complex in conjunction with the E2 enzyme CDC34.

It participates in protein modification; protein ubiquitination. Its function is as follows. Substrate recognition component of a SCF (SKP1-CUL1-F-box protein) E3 ubiquitin-protein ligase complex which mediates the ubiquitination and subsequent proteasomal degradation of target proteins. Probably recognizes and binds to phosphorylated target proteins. The polypeptide is F-box protein YDR306C (Saccharomyces cerevisiae (strain ATCC 204508 / S288c) (Baker's yeast)).